Here is a 632-residue protein sequence, read N- to C-terminus: PWWP domain-containing protein 5 (632 aa).

The 62-residue stretch at Asp-97–Asn-158 folds into the PWWP domain. Residues Arg-310–Glu-452 are disordered. 4 stretches are compositionally biased toward basic and acidic residues: residues Asp-313–Leu-326, Ser-339–Glu-364, Gln-371–Glu-383, and Lys-425–Ser-449. Residues Lys-352–Glu-359 carry the Nuclear localization signal motif.

It belongs to the PDP family. As to quaternary structure, component of the PRC2 (polycomb repressive complex 2) complex which regulates histone methylation on histone H3K27.

The protein localises to the nucleus. Its function is as follows. May influence gene expression by regulating the function of the PRC2 complex and modulating H3K27me3 level. This is PWWP domain-containing protein 5 from Arabidopsis thaliana (Mouse-ear cress).